Consider the following 280-residue polypeptide: Ribosomal RNA small subunit methyltransferase A (280 aa).

S-adenosyl-L-methionine is bound by residues N28, L30, G55, E77, D103, and N122.

Belongs to the class I-like SAM-binding methyltransferase superfamily. rRNA adenine N(6)-methyltransferase family. RsmA subfamily.

Its subcellular location is the cytoplasm. It carries out the reaction adenosine(1518)/adenosine(1519) in 16S rRNA + 4 S-adenosyl-L-methionine = N(6)-dimethyladenosine(1518)/N(6)-dimethyladenosine(1519) in 16S rRNA + 4 S-adenosyl-L-homocysteine + 4 H(+). Specifically dimethylates two adjacent adenosines (A1518 and A1519) in the loop of a conserved hairpin near the 3'-end of 16S rRNA in the 30S particle. May play a critical role in biogenesis of 30S subunits. The polypeptide is Ribosomal RNA small subunit methyltransferase A (Dinoroseobacter shibae (strain DSM 16493 / NCIMB 14021 / DFL 12)).